Reading from the N-terminus, the 220-residue chain is ATP synthase F(0) complex subunit a (220 aa).

Helical transmembrane passes span 12–32 (PTLLGVPLIAVAMMFPWTLLP), 69–89 (WAMILMSLNLLGLLPYTFTPT), 91–111 (QLSLNMGLAIPFWLATVLLGL), 130–150 (LLIPILIIIETISLLIRPFAL), 158–178 (LTAGHLLMQLIATAAFVLLPM), and 183–203 (ALLTTLVLFLLTLLEIAVAMI).

Belongs to the ATPase A chain family. In terms of assembly, component of the ATP synthase complex composed at least of ATP5F1A/subunit alpha, ATP5F1B/subunit beta, ATP5MC1/subunit c (homooctomer), MT-ATP6/subunit a, MT-ATP8/subunit 8, ATP5ME/subunit e, ATP5MF/subunit f, ATP5MG/subunit g, ATP5MK/subunit k, ATP5MJ/subunit j, ATP5F1C/subunit gamma, ATP5F1D/subunit delta, ATP5F1E/subunit epsilon, ATP5PF/subunit F6, ATP5PB/subunit b, ATP5PD/subunit d, ATP5PO/subunit OSCP. ATP synthase complex consists of a soluble F(1) head domain (subunits alpha(3) and beta(3)) - the catalytic core - and a membrane F(0) domain - the membrane proton channel (subunits c, a, 8, e, f, g, k and j). These two domains are linked by a central stalk (subunits gamma, delta, and epsilon) rotating inside the F1 region and a stationary peripheral stalk (subunits F6, b, d, and OSCP). Interacts with DNAJC30; interaction is direct.

The protein localises to the mitochondrion inner membrane. It catalyses the reaction H(+)(in) = H(+)(out). Subunit a, of the mitochondrial membrane ATP synthase complex (F(1)F(0) ATP synthase or Complex V) that produces ATP from ADP in the presence of a proton gradient across the membrane which is generated by electron transport complexes of the respiratory chain. ATP synthase complex consist of a soluble F(1) head domain - the catalytic core - and a membrane F(1) domain - the membrane proton channel. These two domains are linked by a central stalk rotating inside the F(1) region and a stationary peripheral stalk. During catalysis, ATP synthesis in the catalytic domain of F(1) is coupled via a rotary mechanism of the central stalk subunits to proton translocation. With the subunit c (ATP5MC1), forms the proton-conducting channel in the F(0) domain, that contains two crucial half-channels (inlet and outlet) that facilitate proton movement from the mitochondrial intermembrane space (IMS) into the matrix. Protons are taken up via the inlet half-channel and released through the outlet half-channel, following a Grotthuss mechanism. The chain is ATP synthase F(0) complex subunit a from Latimeria chalumnae (Coelacanth).